We begin with the raw amino-acid sequence, 335 residues long: Aspartate--ammonia ligase (335 aa).

Belongs to the class-II aminoacyl-tRNA synthetase family. AsnA subfamily.

The protein resides in the cytoplasm. It catalyses the reaction L-aspartate + NH4(+) + ATP = L-asparagine + AMP + diphosphate + H(+). It functions in the pathway amino-acid biosynthesis; L-asparagine biosynthesis; L-asparagine from L-aspartate (ammonia route): step 1/1. This is Aspartate--ammonia ligase from Pediococcus pentosaceus (strain ATCC 25745 / CCUG 21536 / LMG 10740 / 183-1w).